Here is a 479-residue protein sequence, read N- to C-terminus: Arf-GAP domain and FG repeat-containing protein 2 (479 aa).

Residues 27-153 (EVWCRRVREL…WYVPPEQVKG (127 aa)) form the Arf-GAP domain. The segment at 47 to 70 (CFECAQRGVTYVDITVGSFVCTTC) adopts a C4-type zinc-finger fold. 2 disordered regions span residues 150-223 (QVKG…TKKA) and 450-479 (LSQP…NPFL). A compositionally biased stretch (polar residues) spans 157–167 (SKGSVSATPVQ). N6-acetyllysine is present on Lys-174. Low complexity predominate over residues 194 to 218 (SSQPGSQSQARSSSQARSSQPPSHS). Residues 454-479 (AGISTNPFMTGSSAFASKPPTTNPFL) are compositionally biased toward polar residues.

Interacts with EPS15R.

The sequence is that of Arf-GAP domain and FG repeat-containing protein 2 (Agfg2) from Mus musculus (Mouse).